The primary structure comprises 372 residues: Alanine racemase (372 aa).

K35 (proton acceptor; specific for D-alanine) is an active-site residue. N6-(pyridoxal phosphate)lysine is present on K35. R143 is a binding site for substrate. Y268 serves as the catalytic Proton acceptor; specific for L-alanine. Position 316 (M316) interacts with substrate.

The protein belongs to the alanine racemase family. The cofactor is pyridoxal 5'-phosphate.

The catalysed reaction is L-alanine = D-alanine. The protein operates within amino-acid biosynthesis; D-alanine biosynthesis; D-alanine from L-alanine: step 1/1. Its function is as follows. Catalyzes the interconversion of L-alanine and D-alanine. May also act on other amino acids. The protein is Alanine racemase (alr) of Shewanella frigidimarina (strain NCIMB 400).